The following is a 143-amino-acid chain: Calcitonin (143 aa).

The signal sequence occupies residues methionine 1–alanine 25. A propeptide spanning residues threonine 26–alanine 84 is cleaved from the precursor. Serine 42 carries the phosphoserine modification. Residues threonine 62 to arginine 86 form a disordered region. Acidic residues predominate over residues leucine 65 to serine 78. An intrachain disulfide couples cysteine 87 to cysteine 93. The segment at glycine 112–asparagine 143 is disordered. At proline 118 the chain carries Proline amide. Residues proline 118 to serine 133 are compositionally biased toward basic and acidic residues. The propeptide occupies arginine 122–asparagine 143.

It belongs to the calcitonin family.

The protein resides in the secreted. Calcitonin is a peptide hormone that causes a rapid but short-lived drop in the level of calcium and phosphate in blood by promoting the incorporation of those ions in the bones. Calcitonin function is mediated by the calcitonin receptor/CALCR and the CALCR-RAMP2 (AMYR2) receptor complex. In Ovis aries (Sheep), this protein is Calcitonin (CALCA).